Consider the following 218-residue polypeptide: Small ribosomal subunit protein uS3c (218 aa).

The 72-residue stretch at valine 47–leucine 118 folds into the KH type-2 domain.

It belongs to the universal ribosomal protein uS3 family. In terms of assembly, part of the 30S ribosomal subunit.

The protein resides in the plastid. The protein localises to the chloroplast. This chain is Small ribosomal subunit protein uS3c (rps3), found in Angiopteris evecta (Mule's foot fern).